Consider the following 402-residue polypeptide: 3-dehydroquinate synthase (402 aa).

Belongs to the archaeal-type DHQ synthase family.

The enzyme catalyses 2-amino-2,3,7-trideoxy-D-lyxo-hept-6-ulosonate + NAD(+) + H2O = 3-dehydroquinate + NH4(+) + NADH + H(+). Catalyzes the oxidative deamination and cyclization of 2-amino-3,7-dideoxy-D-threo-hept-6-ulosonic acid (ADH) to yield 3-dehydroquinate (DHQ), which is fed into the canonical shikimic pathway of aromatic amino acid biosynthesis. This is 3-dehydroquinate synthase from Methanopyrus kandleri (strain AV19 / DSM 6324 / JCM 9639 / NBRC 100938).